A 92-amino-acid polypeptide reads, in one-letter code: C-C motif chemokine 3 (92 aa).

An N-terminal signal peptide occupies residues 1–23 (MKVSTAALAVLLCTMALWNEVFS). Cystine bridges form between C34–C57 and C35–C73.

This sequence belongs to the intercrine beta (chemokine CC) family. In terms of assembly, self-associates. Also heterodimer of MIP-1-alpha(4-69) and MIP-1-beta(3-69). Interacts with CCR1.

It localises to the secreted. Monokine with inflammatory and chemokinetic properties. Binds to CCR1, CCR4 and CCR5. One of the major HIV-suppressive factors produced by CD8+ T-cells. Recombinant MIP-1-alpha induces a dose-dependent inhibition of different strains of HIV-1, HIV-2, and simian immunodeficiency virus (SIV). This is C-C motif chemokine 3 (Ccl3) from Rattus norvegicus (Rat).